The sequence spans 304 residues: Bacteriochlorophyll synthase 33 kDa chain (304 aa).

A run of 9 helical transmembrane segments spans residues 26–46 (VTWFPPMWAYLCGAVSSNVPI), 51–71 (GVVVLGIVLAGPIVCGMSQAA), 94–114 (IPGLWGLYIAIAMSLLSLVVG), 117–137 (LGSWGFVATLLGVAAAWAYSV), 151–171 (GLVGLAYEGLPWITGAAVLLA), 178–198 (GFPIVMMATLYALGAHGIMTI), 227–247 (IACTVMGLAQALVITMLYLFS), 250–270 (YHATAVLVLLCGQFWAMSVWM), and 279–299 (WYNGTGVVMYVSGMMITAFAI).

The protein localises to the cell membrane. It functions in the pathway porphyrin-containing compound metabolism; bacteriochlorophyll biosynthesis (light-independent). In terms of biological role, catalyzes the esterification of bacteriochlorophyllide a by geranylgeraniol-PPi. This chain is Bacteriochlorophyll synthase 33 kDa chain (bchG), found in Rhodobacter capsulatus (strain ATCC BAA-309 / NBRC 16581 / SB1003).